Consider the following 537-residue polypeptide: Synaptotagmin-C (537 aa).

Residues 1-52 (MSGDGEDELCRNALALVNELCFSVRGNHNNEKCIEFSYLLRDRDRTRHIETD) are Vesicular-facing. The chain crosses the membrane as a helical span at residues 53-78 (ISVSLLSVIVTFCGIVLLGVSLFVSW). Over 79 to 537 (KLCWIPWRDK…TIVVESPHSV (459 aa)) the chain is Cytoplasmic. Disordered stretches follow at residues 92–111 (PQRRDSQHHPHQHLHHHHSH) and 142–200 (IKLS…EFGT). Positions 100–110 (HPHQHLHHHHS) are enriched in basic residues. Positions 143–174 (KLSQTSPDIPVDTSSGSKENNIPNAHSQQQVS) are enriched in polar residues. The segment at 228–477 (EAKKHQKVNC…VIGMCRVGNA (250 aa)) is phospholipid binding. 2 consecutive C2 domains span residues 236–357 (NCGR…TIWR) and 368–501 (DLGE…EQWH). Positions 267, 273, 325, 326, 327, 330, 333, 399, 405, 459, and 461 each coordinate Ca(2+).

This sequence belongs to the synaptotagmin family. In terms of assembly, homodimer or homotrimer (possible). Requires Ca(2+) as cofactor.

It localises to the cytoplasmic vesicle. The protein localises to the secretory vesicle. The protein resides in the synaptic vesicle membrane. It is found in the synapse. In terms of biological role, may have a regulatory role in the membrane interactions during trafficking of synaptic vesicles at the active zone of the synapse. It binds acidic phospholipids with a specificity that requires the presence of both an acidic head group and a diacyl backbone. This is Synaptotagmin-C (P65-C) from Diplobatis ommata (Ocellated electric ray).